A 155-amino-acid polypeptide reads, in one-letter code: Large ribosomal subunit protein uL13 (155 aa).

It belongs to the universal ribosomal protein uL13 family. As to quaternary structure, part of the 50S ribosomal subunit.

Functionally, this protein is one of the early assembly proteins of the 50S ribosomal subunit, although it is not seen to bind rRNA by itself. It is important during the early stages of 50S assembly. In Rickettsia conorii (strain ATCC VR-613 / Malish 7), this protein is Large ribosomal subunit protein uL13.